The sequence spans 499 residues: Maturase K (499 aa).

The protein belongs to the intron maturase 2 family. MatK subfamily.

It is found in the plastid. The protein localises to the chloroplast. In terms of biological role, usually encoded in the trnK tRNA gene intron. Probably assists in splicing its own and other chloroplast group II introns. The protein is Maturase K of Ceratonia siliqua (Carob).